Here is a 303-residue protein sequence, read N- to C-terminus: BAG family molecular chaperone regulator 3 (303 aa).

Positions 1–11 (MMKMNTGTSPS) are enriched in polar residues. Residues 1–27 (MMKMNTGTSPSVIGGGTSGNEWESRPG) form a disordered region. The Ubiquitin-like domain maps to 45–119 (FRVRVKYGSV…LVVKEDPISQ (75 aa)). Residues 138 to 216 (SISDISFEVD…KYVEALDLLK (79 aa)) enclose the BAG domain. The interval 249–268 (VEEEEEEPRNSNASSSSGTP) is disordered. A compositionally biased stretch (polar residues) spans 258-267 (NSNASSSSGT). The residue at position 263 (S263) is a Phosphoserine.

Binds to the ATPase domain of HSP70/HSC70 chaperones. Interacts with HSP70-1.

In terms of biological role, co-chaperone that regulates diverse cellular pathways, such as programmed cell death and stress responses. This Arabidopsis thaliana (Mouse-ear cress) protein is BAG family molecular chaperone regulator 3 (BAG3).